The primary structure comprises 147 residues: D-aminoacyl-tRNA deacylase (147 aa).

The Gly-cisPro motif, important for rejection of L-amino acids motif lies at 137-138; it reads GP.

Belongs to the DTD family. In terms of assembly, homodimer.

Its subcellular location is the cytoplasm. It catalyses the reaction glycyl-tRNA(Ala) + H2O = tRNA(Ala) + glycine + H(+). The enzyme catalyses a D-aminoacyl-tRNA + H2O = a tRNA + a D-alpha-amino acid + H(+). Functionally, an aminoacyl-tRNA editing enzyme that deacylates mischarged D-aminoacyl-tRNAs. Also deacylates mischarged glycyl-tRNA(Ala), protecting cells against glycine mischarging by AlaRS. Acts via tRNA-based rather than protein-based catalysis; rejects L-amino acids rather than detecting D-amino acids in the active site. By recycling D-aminoacyl-tRNA to D-amino acids and free tRNA molecules, this enzyme counteracts the toxicity associated with the formation of D-aminoacyl-tRNA entities in vivo and helps enforce protein L-homochirality. The sequence is that of D-aminoacyl-tRNA deacylase from Acinetobacter baumannii (strain ACICU).